The primary structure comprises 143 residues: 3-dehydroquinate dehydratase (143 aa).

Catalysis depends on tyrosine 22, which acts as the Proton acceptor. Residues asparagine 73, histidine 79, and aspartate 86 each coordinate substrate. Catalysis depends on histidine 99, which acts as the Proton donor. Substrate is bound by residues 100 to 101 (LS) and arginine 110.

Belongs to the type-II 3-dehydroquinase family. Homododecamer.

The catalysed reaction is 3-dehydroquinate = 3-dehydroshikimate + H2O. It functions in the pathway metabolic intermediate biosynthesis; chorismate biosynthesis; chorismate from D-erythrose 4-phosphate and phosphoenolpyruvate: step 3/7. Catalyzes a trans-dehydration via an enolate intermediate. The protein is 3-dehydroquinate dehydratase of Salinispora tropica (strain ATCC BAA-916 / DSM 44818 / JCM 13857 / NBRC 105044 / CNB-440).